Reading from the N-terminus, the 194-residue chain is uncharacterized protein (194 aa).

To A.aeolicus AQ_423.

This is an uncharacterized protein from Aquifex aeolicus (strain VF5).